A 739-amino-acid polypeptide reads, in one-letter code: MSLMLEPNPTQIKEERIYAEMGLTDEEFAMVEKILGRLPNYTETGLFSVMWSEHCSYKNSKPVLRKFPTTGERVLQGPGEGAGIVDIGDNQAVVFKMESHNHPSAIEPYQGAATGVGGIIRDVFSMGARPVALLNSLRFGELQSPRVKYLFEEVVAGIAGYGNCIGIPTVGGEVQFDPCYEGNPLVNAMCVGLINHEDIKKGQAHGAGNTVMYVGASTGRDGIHGATFASEELSESSEAKRPAVQVGDPFMEKLLIEACLELIQSDALVGIQDMGAAGLTSSSAEMASKAGMGIEMYLDDVPQRETGMTPYEMMLSESQERMLIVVKKGREQEIVDLFEKYDLAAVTMGKVTEDKMLRLFHKGEKVAEVPADALAEEAPIYHKPSKEAAYFAEFQAMKMETPKVENYKETLFALLQQPTIASKEWVYDQYDYQVRTSTVVTPGSDAAVVRVRGTEKGLAMTTDCNSRYIYLDPEMGGKIAVAEAARNIVCSGGEPLAITDCLNFGNPEKPEIFWQIEKSVDGMSEACRTLQTPVIGGNVSMYNERSGEAVYPTPTVGMVGLVHDLKHVTTQEFKQAGDLVYVIGETKAEFGGSELQKMIHGKIFGQSPSIDLDVELKRQKQVLEAIQAGLVQSAHDVAEGGLAVAISESAIGAKGLGATVKLDGEATAALFAESQSRFVITVKRENKEAFEKVVEAIQVGEVTSTNEVTIHNEENEVLLTANVDEMRKAWKGAIPCLLK.

The active site involves histidine 54. ATP is bound by residues tyrosine 57 and lysine 96. Glutamate 98 serves as a coordination point for Mg(2+). Residues 99–102 (SHNH) and arginine 121 contribute to the substrate site. Histidine 100 acts as the Proton acceptor in catalysis. Aspartate 122 lines the Mg(2+) pocket. Glutamine 245 contributes to the substrate binding site. Aspartate 273 contributes to the Mg(2+) binding site. 317 to 319 (ESQ) contributes to the substrate binding site. ATP contacts are provided by aspartate 500 and glycine 537. Residue asparagine 538 coordinates Mg(2+). Serine 540 contributes to the substrate binding site.

Belongs to the FGAMS family. As to quaternary structure, monomer. Part of the FGAM synthase complex composed of 1 PurL, 1 PurQ and 2 PurS subunits.

The protein resides in the cytoplasm. The enzyme catalyses N(2)-formyl-N(1)-(5-phospho-beta-D-ribosyl)glycinamide + L-glutamine + ATP + H2O = 2-formamido-N(1)-(5-O-phospho-beta-D-ribosyl)acetamidine + L-glutamate + ADP + phosphate + H(+). It functions in the pathway purine metabolism; IMP biosynthesis via de novo pathway; 5-amino-1-(5-phospho-D-ribosyl)imidazole from N(2)-formyl-N(1)-(5-phospho-D-ribosyl)glycinamide: step 1/2. Functionally, part of the phosphoribosylformylglycinamidine synthase complex involved in the purines biosynthetic pathway. Catalyzes the ATP-dependent conversion of formylglycinamide ribonucleotide (FGAR) and glutamine to yield formylglycinamidine ribonucleotide (FGAM) and glutamate. The FGAM synthase complex is composed of three subunits. PurQ produces an ammonia molecule by converting glutamine to glutamate. PurL transfers the ammonia molecule to FGAR to form FGAM in an ATP-dependent manner. PurS interacts with PurQ and PurL and is thought to assist in the transfer of the ammonia molecule from PurQ to PurL. This chain is Phosphoribosylformylglycinamidine synthase subunit PurL, found in Bacillus cereus (strain ATCC 14579 / DSM 31 / CCUG 7414 / JCM 2152 / NBRC 15305 / NCIMB 9373 / NCTC 2599 / NRRL B-3711).